Consider the following 666-residue polypeptide: tRNA 5-methylaminomethyl-2-thiouridine biosynthesis bifunctional protein MnmC (666 aa).

The segment at 1 to 245 is tRNA (mnm(5)s(2)U34)-methyltransferase; sequence MKQYAIQPAN…KREMLCGVMA (245 aa). The FAD-dependent cmnm(5)s(2)U34 oxidoreductase stretch occupies residues 270-666; it reads IGGGIASALL…RKLLKGKAVK (397 aa).

In the N-terminal section; belongs to the methyltransferase superfamily. tRNA (mnm(5)s(2)U34)-methyltransferase family. This sequence in the C-terminal section; belongs to the DAO family. Requires FAD as cofactor.

It localises to the cytoplasm. It catalyses the reaction 5-aminomethyl-2-thiouridine(34) in tRNA + S-adenosyl-L-methionine = 5-methylaminomethyl-2-thiouridine(34) in tRNA + S-adenosyl-L-homocysteine + H(+). Functionally, catalyzes the last two steps in the biosynthesis of 5-methylaminomethyl-2-thiouridine (mnm(5)s(2)U) at the wobble position (U34) in tRNA. Catalyzes the FAD-dependent demodification of cmnm(5)s(2)U34 to nm(5)s(2)U34, followed by the transfer of a methyl group from S-adenosyl-L-methionine to nm(5)s(2)U34, to form mnm(5)s(2)U34. The protein is tRNA 5-methylaminomethyl-2-thiouridine biosynthesis bifunctional protein MnmC of Citrobacter koseri (strain ATCC BAA-895 / CDC 4225-83 / SGSC4696).